Reading from the N-terminus, the 208-residue chain is Small ribosomal subunit protein uS4 (208 aa).

The S4 RNA-binding domain maps to 98 to 163 (RRLDNVVYRL…KPRFIEIKEK (66 aa)).

This sequence belongs to the universal ribosomal protein uS4 family. Part of the 30S ribosomal subunit. Contacts protein S5. The interaction surface between S4 and S5 is involved in control of translational fidelity.

One of the primary rRNA binding proteins, it binds directly to 16S rRNA where it nucleates assembly of the body of the 30S subunit. Functionally, with S5 and S12 plays an important role in translational accuracy. This chain is Small ribosomal subunit protein uS4, found in Caldicellulosiruptor saccharolyticus (strain ATCC 43494 / DSM 8903 / Tp8T 6331).